The following is a 66-amino-acid chain: Cold shock-like protein CspD (66 aa).

The CSD domain occupies glycine 4–valine 63.

As to quaternary structure, homodimer.

The protein resides in the cytoplasm. The polypeptide is Cold shock-like protein CspD (cspD) (Bacillus anthracis).